We begin with the raw amino-acid sequence, 296 residues long: Nitrogenase iron protein 1 (296 aa).

Residue 11 to 18 coordinates ATP; sequence GKGGIGKS. Residue Cys99 participates in [4Fe-4S] cluster binding. An ADP-ribosylarginine; by dinitrogenase reductase ADP-ribosyltransferase modification is found at Arg102. Residue Cys133 coordinates [4Fe-4S] cluster.

Belongs to the NifH/BchL/ChlL family. In terms of assembly, homodimer. It depends on [4Fe-4S] cluster as a cofactor. In terms of processing, the reversible ADP-ribosylation of Arg-102 inactivates the nitrogenase reductase and regulates nitrogenase activity.

It carries out the reaction N2 + 8 reduced [2Fe-2S]-[ferredoxin] + 16 ATP + 16 H2O = H2 + 8 oxidized [2Fe-2S]-[ferredoxin] + 2 NH4(+) + 16 ADP + 16 phosphate + 6 H(+). Its function is as follows. The key enzymatic reactions in nitrogen fixation are catalyzed by the nitrogenase complex, which has 2 components: the iron protein and the molybdenum-iron protein. In Azorhizobium caulinodans (strain ATCC 43989 / DSM 5975 / JCM 20966 / LMG 6465 / NBRC 14845 / NCIMB 13405 / ORS 571), this protein is Nitrogenase iron protein 1 (nifH1).